We begin with the raw amino-acid sequence, 406 residues long: MTQLETRTEPMIINFGPHHPSMHGVLRLVVTLDGEDVVDCEPVIGYLHRGMEKIAESRTAITFVPYVSRWDYAAGMFNEAITVNATEKLMDLEIPRRASYIRVLMLELNRIANHLLWLGPFLADVGAQTPFFYIFREREMIYDLWEAVTGQRLINNNYFRVGGVACDLPFGWLDKCEDFCDWFGPKIDEYEQLITNNPIFRRRIEGLGVISREQAINWSLSGPMLRASGVPWDLRKVDHYECYDDFDWDIAWAKEGDCYARYLVRIEEMRQSLRILKQALKMIPGGPTENLEAQCGFDSTDTNQDLDKKRSVATGEVSGNEYTIGPKKINLNKCPEGELYCRVESGKGELGVFIISNGEANPWRWKIRAADFNNLQILPHILTGAKVADVMAILGSIDVIMGSVDR.

The protein belongs to the complex I 49 kDa subunit family. NDH is composed of at least 16 different subunits, 5 of which are encoded in the nucleus.

The protein localises to the plastid. It is found in the organellar chromatophore thylakoid membrane. The catalysed reaction is a quinone + NADH + H(+) = a quinol + NAD(+). Its function is as follows. NDH shuttles electrons from NAD(P)H:plastoquinone, via FMN and iron-sulfur (Fe-S) centers, to quinones in the photosynthetic chain and possibly in a chloroplast respiratory chain. The immediate electron acceptor for the enzyme in this species is believed to be plastoquinone. Couples the redox reaction to proton translocation, and thus conserves the redox energy in a proton gradient. The sequence is that of NAD(P)H-quinone oxidoreductase subunit H, organellar chromatophore from Paulinella chromatophora.